The primary structure comprises 132 residues: Small ribosomal subunit protein uS8c (132 aa).

Belongs to the universal ribosomal protein uS8 family. In terms of assembly, part of the 30S ribosomal subunit.

Its subcellular location is the plastid. It is found in the chloroplast. One of the primary rRNA binding proteins, it binds directly to 16S rRNA central domain where it helps coordinate assembly of the platform of the 30S subunit. The sequence is that of Small ribosomal subunit protein uS8c (rps8) from Dioscorea elephantipes (Elephant's foot yam).